We begin with the raw amino-acid sequence, 259 residues long: Deoxyribose-phosphate aldolase (259 aa).

Aspartate 102 serves as the catalytic Proton donor/acceptor. The active-site Schiff-base intermediate with acetaldehyde is lysine 167. The active-site Proton donor/acceptor is lysine 201.

The protein belongs to the DeoC/FbaB aldolase family. DeoC type 2 subfamily.

The protein resides in the cytoplasm. The catalysed reaction is 2-deoxy-D-ribose 5-phosphate = D-glyceraldehyde 3-phosphate + acetaldehyde. The protein operates within carbohydrate degradation; 2-deoxy-D-ribose 1-phosphate degradation; D-glyceraldehyde 3-phosphate and acetaldehyde from 2-deoxy-alpha-D-ribose 1-phosphate: step 2/2. Catalyzes a reversible aldol reaction between acetaldehyde and D-glyceraldehyde 3-phosphate to generate 2-deoxy-D-ribose 5-phosphate. This is Deoxyribose-phosphate aldolase from Klebsiella pneumoniae (strain 342).